The primary structure comprises 736 residues: MSFRKPPIRLATQVGGKEIIFETGYMATQANGSLTVQCGGTIVLVTVCSQPLESDKGFFPLTVEYSEKMYAAGRIPGSFFRREIGRPSERETLISRLIDRPIRPMFPKGLAEDVQILANVISSDQENESDILAVTGASAAVMLSSLPFECAIAAGRIGRLNGQFVLNPTINEIELSDLNIVFAASSEAVVMVEGEANVVEEEIIIEALEWGHKEIQPIITLQNKIQELAGRNKIPFVPVEENIVFSKKVEELADKFGIVEAMQVKEKQFRKEARKAVKEKVLAILKEDPLYAEHSDILNTVSEIIGNLEKKIVRQRIVKENLRIDGRDTITVRPIAIEVGLLPRTHGSALFTRGETQSLCITTLGSSTDNQRVDSLAGDTVKNFMLHYNFPPFSVGEVKPVRVSRREIGHGALAEKALKYILPSQNTFPFTVRIVAETLESNGSSSMAAICGGCLSLMDAGVPISAPVAGVAMGLIKEDDQFIVLTDIIGDEDAFGDMDFKIAGTTKGITAVQMDIKITGLTTDVMRKAMEQAREARIHILSEMAKALDVPRSNLSQYAPQHAELVVNPDAIRMIIGPGGKNIKQITTVTGAAIDINDSGKISIFAPTSEAMEQAKQMILYYDQRPELGKNYKGKVRKILEIGAILEIMPNVEAFVHISQLAVEHIAQVTDVVQLGEDMIIKVIEITGDRVRASRKAVLLEEEGITWTPEESSRFSKGNRNGDRSRHNNRERTRRT.

Residues D493 and D499 each contribute to the Mg(2+) site. The KH domain occupies 560–619 (PQHAELVVNPDAIRMIIGPGGKNIKQITTVTGAAIDINDSGKISIFAPTSEAMEQAKQMI). Residues 629–703 (GKNYKGKVRK…SRKAVLLEEE (75 aa)) form the S1 motif domain. The tract at residues 710 to 736 (EESSRFSKGNRNGDRSRHNNRERTRRT) is disordered. The segment covering 720-736 (RNGDRSRHNNRERTRRT) has biased composition (basic and acidic residues).

Belongs to the polyribonucleotide nucleotidyltransferase family. The cofactor is Mg(2+).

Its subcellular location is the cytoplasm. It carries out the reaction RNA(n+1) + phosphate = RNA(n) + a ribonucleoside 5'-diphosphate. Involved in mRNA degradation. Catalyzes the phosphorolysis of single-stranded polyribonucleotides processively in the 3'- to 5'-direction. The sequence is that of Polyribonucleotide nucleotidyltransferase from Lawsonia intracellularis (strain PHE/MN1-00).